A 332-amino-acid chain; its full sequence is Ketol-acid reductoisomerase (NADP(+)) 2 (332 aa).

Residues 2–182 form the KARI N-terminal Rossmann domain; it reads AELFYDADAD…GGTRAGVIRT (181 aa). NADP(+) contacts are provided by residues 25 to 28, serine 51, serine 53, and 83 to 86; these read YGSQ and DPIQ. Histidine 108 is an active-site residue. NADP(+) is bound at residue glycine 134. The region spanning 183-328 is the KARI C-terminal knotted domain; the sequence is TFTEETETDL…KELRKLMSWV (146 aa). Mg(2+) is bound by residues aspartate 191, glutamate 195, glutamate 227, and glutamate 231. Serine 252 serves as a coordination point for substrate.

This sequence belongs to the ketol-acid reductoisomerase family. It depends on Mg(2+) as a cofactor.

The enzyme catalyses (2R)-2,3-dihydroxy-3-methylbutanoate + NADP(+) = (2S)-2-acetolactate + NADPH + H(+). The catalysed reaction is (2R,3R)-2,3-dihydroxy-3-methylpentanoate + NADP(+) = (S)-2-ethyl-2-hydroxy-3-oxobutanoate + NADPH + H(+). It participates in amino-acid biosynthesis; L-isoleucine biosynthesis; L-isoleucine from 2-oxobutanoate: step 2/4. Its pathway is amino-acid biosynthesis; L-valine biosynthesis; L-valine from pyruvate: step 2/4. Involved in the biosynthesis of branched-chain amino acids (BCAA). Catalyzes an alkyl-migration followed by a ketol-acid reduction of (S)-2-acetolactate (S2AL) to yield (R)-2,3-dihydroxy-isovalerate. In the isomerase reaction, S2AL is rearranged via a Mg-dependent methyl migration to produce 3-hydroxy-3-methyl-2-ketobutyrate (HMKB). In the reductase reaction, this 2-ketoacid undergoes a metal-dependent reduction by NADPH to yield (R)-2,3-dihydroxy-isovalerate. This is Ketol-acid reductoisomerase (NADP(+)) 2 from Streptomyces coelicolor (strain ATCC BAA-471 / A3(2) / M145).